We begin with the raw amino-acid sequence, 564 residues long: Hexose transporter HXT17 (564 aa).

Over residues 1-12 (MQSSTESDRDIQ) the composition is skewed to basic and acidic residues. Residues 1-22 (MQSSTESDRDIQDGPDADIHVA) form a disordered region. Over 1 to 52 (MQSSTESDRDIQDGPDADIHVAPPVEKEWSDGFDDNEVINGDNVEPPKRGLI) the chain is Cytoplasmic. Residues 53–73 (GYLVIYLLCYPISFGGFLPGW) traverse the membrane as a helical segment. Residues 74 to 109 (DSGITAGFINMDNFKMNFGSYKHSTGEYYLSNVRMG) lie on the Extracellular side of the membrane. The chain crosses the membrane as a helical span at residues 110–130 (LLVAMFSIGCAIGGLIFARLA). Residues 131-136 (DTLGRR) lie on the Cytoplasmic side of the membrane. Residues 137 to 157 (LAIVIVVLVYMVGAIIQISSN) traverse the membrane as a helical segment. The Extracellular segment spans residues 158 to 167 (HKWYQYFVGK). A helical transmembrane segment spans residues 168-188 (IIYGLGAGGCSVLCPMLLSEI). Topologically, residues 189–194 (APTDLR) are cytoplasmic. A helical transmembrane segment spans residues 195–215 (GGLVSLYQLNMTFGIFLGYCS). The Extracellular portion of the chain corresponds to 216–229 (VYGTRKYDNTAQWR). The chain crosses the membrane as a helical span at residues 230-250 (VPLGLCFLWTLIIIIGMLLVP). Residues 251–333 (ESPRYLIECE…VQTFLQLTGE (83 aa)) lie on the Cytoplasmic side of the membrane. A helical membrane pass occupies residues 334 to 350 (NYFFFYGTTIFKSVGLT). Residues 351-356 (DGFETS) are Extracellular-facing. Residues 357–374 (IVLGTVNFFSTIIAVMVV) traverse the membrane as a helical segment. Topologically, residues 375–381 (DKIGRRK) are cytoplasmic. The chain crosses the membrane as a helical span at residues 382–402 (CLLFGAAGMMACMVIFASIGV). At 403 to 424 (KCLYPHGQDGPSSKGAGNAMIV) the chain is on the extracellular side. The helical transmembrane segment at 425–445 (FTCFYIFCFATTWAPVAYIVV) threads the bilayer. Residues 446 to 462 (AESFPSKVKSRAMSIST) lie on the Cytoplasmic side of the membrane. A helical transmembrane segment spans residues 463-483 (ACNWLWQFLIGFFTPFITGSI). H484 is a topological domain (extracellular). The helical transmembrane segment at 485–505 (FYYGYVFVGCLVAMFLYVFFF) threads the bilayer. At 506-564 (LPETIGLSLEEIQLLYEEGIKPWKSASWVPPSRRGIPSEESKTEKKDWKKFLKFSKGSD) the chain is on the cytoplasmic side.

This sequence belongs to the major facilitator superfamily. Sugar transporter (TC 2.A.1.1) family.

Its subcellular location is the membrane. Probable glucose transporter. In Saccharomyces cerevisiae (strain ATCC 204508 / S288c) (Baker's yeast), this protein is Hexose transporter HXT17 (HXT17).